Here is a 99-residue protein sequence, read N- to C-terminus: Bacterial microcompartment shell vertex protein EutN (99 aa).

The BMV domain occupies 5–87 (MKLAVVTGQI…VDLCVIGIVD (83 aa)).

The protein belongs to the CcmL/EutN family. Homopentamer with a small central pore.

The protein localises to the bacterial microcompartment. The protein operates within amine and polyamine degradation; ethanolamine degradation. Probably forms vertices in the bacterial microcompartment (BMC) shell dedicated to ethanolamine degradation. Expression of eutK, eutL, eutM, eutN, eutS (eutSMNLK) in E.coli leads to formation of a single BMC. Coexpression of eutQ with eutSMNLK permits E.coli to make cells with more than one mobile BMC, as is usual in vivo. It may be involved in transporting positively charged molecules into and out of the BMC. In terms of biological role, the ethanolamine (EA) catabolic bacterial microcompartment (BMC) probably concentrates low levels of ethanolamine catabolic enzymes, concentrates volatile reaction intermediates, keeps the level of toxic acetaldehyde low, generates enough acetyl-CoA to support cell growth, and maintains a pool of free coenzyme A (CoA) and NAD. Its function is as follows. Expression of the eut operon allows this bacteria to use ethanolamine (EA) as a carbon, nitrogen and energy source. It relies on cobalamin (vitamin B12) both as a cofactor for the ethanolamine ammonia-lyase (EAL) activity and to induce the operon. EA enhances bacterial survival in macrophages in a concentration-dependent manner, suggesting it is an important nutrient during infection. The protein is Bacterial microcompartment shell vertex protein EutN of Salmonella typhimurium (strain LT2 / SGSC1412 / ATCC 700720).